A 571-amino-acid polypeptide reads, in one-letter code: Proline--tRNA ligase (571 aa).

This sequence belongs to the class-II aminoacyl-tRNA synthetase family. ProS type 1 subfamily. As to quaternary structure, homodimer.

The protein localises to the cytoplasm. It carries out the reaction tRNA(Pro) + L-proline + ATP = L-prolyl-tRNA(Pro) + AMP + diphosphate. Its function is as follows. Catalyzes the attachment of proline to tRNA(Pro) in a two-step reaction: proline is first activated by ATP to form Pro-AMP and then transferred to the acceptor end of tRNA(Pro). As ProRS can inadvertently accommodate and process non-cognate amino acids such as alanine and cysteine, to avoid such errors it has two additional distinct editing activities against alanine. One activity is designated as 'pretransfer' editing and involves the tRNA(Pro)-independent hydrolysis of activated Ala-AMP. The other activity is designated 'posttransfer' editing and involves deacylation of mischarged Ala-tRNA(Pro). The misacylated Cys-tRNA(Pro) is not edited by ProRS. This chain is Proline--tRNA ligase, found in Shewanella sp. (strain W3-18-1).